The following is a 523-amino-acid chain: Glycerate kinase (523 aa).

Position 60 is a phosphoserine (serine 60). Lysine 200 is subject to N6-acetyllysine.

It belongs to the glycerate kinase type-2 family.

It localises to the cytoplasm. The catalysed reaction is (R)-glycerate + ATP = (2R)-3-phosphoglycerate + ADP + H(+). The chain is Glycerate kinase (GLYCTK) from Bos taurus (Bovine).